The following is a 128-amino-acid chain: Small ribosomal subunit protein uS9 (128 aa).

This sequence belongs to the universal ribosomal protein uS9 family.

The protein is Small ribosomal subunit protein uS9 of Cytophaga hutchinsonii (strain ATCC 33406 / DSM 1761 / CIP 103989 / NBRC 15051 / NCIMB 9469 / D465).